The primary structure comprises 157 residues: UPF0225 protein PA1039 (157 aa).

This sequence belongs to the UPF0225 family.

The polypeptide is UPF0225 protein PA1039 (Pseudomonas aeruginosa (strain ATCC 15692 / DSM 22644 / CIP 104116 / JCM 14847 / LMG 12228 / 1C / PRS 101 / PAO1)).